Reading from the N-terminus, the 260-residue chain is Sulfoquinovose 1-dehydrogenase (260 aa).

Y160 (proton acceptor) is an active-site residue.

This sequence belongs to the short-chain dehydrogenases/reductases (SDR) family.

The catalysed reaction is 6-sulfo-D-quinovose + NAD(+) = 6-deoxy-6-sulfo-D-glucono-1,5-lactone + NADH + H(+). Catalyzes the oxidation of sulfoquinovose to 6-deoxy-6-sulfo-D-glucono-1,5-lactone, with a strong preference for NAD(+) as the electron acceptor. Is involved in a degradation pathway of sulfoquinovose (SQ) that allows P.putida SQ1 to use SQ as the sole carbon and energy source for growth. This is Sulfoquinovose 1-dehydrogenase from Pseudomonas putida (Arthrobacter siderocapsulatus).